Consider the following 889-residue polypeptide: Alanine--tRNA ligase (889 aa).

Residues H564, H568, C671, and H675 each coordinate Zn(2+).

The protein belongs to the class-II aminoacyl-tRNA synthetase family. Zn(2+) serves as cofactor.

The protein localises to the cytoplasm. The catalysed reaction is tRNA(Ala) + L-alanine + ATP = L-alanyl-tRNA(Ala) + AMP + diphosphate. Functionally, catalyzes the attachment of alanine to tRNA(Ala) in a two-step reaction: alanine is first activated by ATP to form Ala-AMP and then transferred to the acceptor end of tRNA(Ala). Also edits incorrectly charged Ser-tRNA(Ala) and Gly-tRNA(Ala) via its editing domain. The chain is Alanine--tRNA ligase from Pelagibacter ubique (strain HTCC1062).